A 229-amino-acid polypeptide reads, in one-letter code: MIQAIVTDIEGTTTDIRFVQQVLFPYARERLTPFLREHQQDEEVANALLSLRREVEQPDADIETLITTLHSFMDEDRKSTALKAIQGIIWRSGYLQGDFRGHLYPDVTPQLADWQQQGLKLYVYSSGSVDAQKLLFGYSDAGDLQPLFSGYFDTHVGAKREVSAYQNIAHQLAIAPQALLFLSDIRQELDAAQLAGWQTCQLIRDLPDSESRHLQVSRFDEIDIEGFTA.

It belongs to the HAD-like hydrolase superfamily. MasA/MtnC family. Monomer. It depends on Mg(2+) as a cofactor.

The enzyme catalyses 5-methylsulfanyl-2,3-dioxopentyl phosphate + H2O = 1,2-dihydroxy-5-(methylsulfanyl)pent-1-en-3-one + phosphate. It functions in the pathway amino-acid biosynthesis; L-methionine biosynthesis via salvage pathway; L-methionine from S-methyl-5-thio-alpha-D-ribose 1-phosphate: step 3/6. It participates in amino-acid biosynthesis; L-methionine biosynthesis via salvage pathway; L-methionine from S-methyl-5-thio-alpha-D-ribose 1-phosphate: step 4/6. In terms of biological role, bifunctional enzyme that catalyzes the enolization of 2,3-diketo-5-methylthiopentyl-1-phosphate (DK-MTP-1-P) into the intermediate 2-hydroxy-3-keto-5-methylthiopentenyl-1-phosphate (HK-MTPenyl-1-P), which is then dephosphorylated to form the acireductone 1,2-dihydroxy-3-keto-5-methylthiopentene (DHK-MTPene). The chain is Enolase-phosphatase E1 from Yersinia enterocolitica serotype O:8 / biotype 1B (strain NCTC 13174 / 8081).